The following is a 130-amino-acid chain: Holo-[acyl-carrier-protein] synthase (130 aa).

Mg(2+) is bound by residues aspartate 8 and glutamate 62.

Belongs to the P-Pant transferase superfamily. AcpS family. Mg(2+) is required as a cofactor.

It localises to the cytoplasm. The catalysed reaction is apo-[ACP] + CoA = holo-[ACP] + adenosine 3',5'-bisphosphate + H(+). Its function is as follows. Transfers the 4'-phosphopantetheine moiety from coenzyme A to a Ser of acyl-carrier-protein. The polypeptide is Holo-[acyl-carrier-protein] synthase (Herminiimonas arsenicoxydans).